A 1078-amino-acid chain; its full sequence is Carbamoyl phosphate synthase large chain (1078 aa).

The tract at residues 1 to 401 (MARQPLVSSV…ALQKAVRGLE (401 aa)) is carboxyphosphate synthetic domain. 12 residues coordinate ATP: Arg-129, Arg-169, Gly-175, Gly-176, Arg-208, Leu-210, Glu-215, Gly-241, Val-242, His-243, Gln-284, and Glu-298. The region spanning 133-327 (KELLLEIGEP…IARIAAKLAI (195 aa)) is the ATP-grasp 1 domain. Mg(2+) is bound by residues Gln-284, Glu-298, and Asn-300. Positions 284, 298, and 300 each coordinate Mn(2+). Residues 402–546 (TDQTDLTWED…YATYEDENEA (145 aa)) form an oligomerization domain region. The interval 547 to 935 (PPLDSPKAVV…ALAKAFLAAG (389 aa)) is carbamoyl phosphate synthetic domain. The 191-residue stretch at 677-867 (ERFLHELGIP…MVDVATQILL (191 aa)) folds into the ATP-grasp 2 domain. Residues Arg-713, Lys-752, Leu-754, Glu-758, Gly-783, Val-784, His-785, Ser-786, Gln-826, and Glu-838 each coordinate ATP. The Mg(2+) site is built by Gln-826, Glu-838, and Asn-840. Mn(2+)-binding residues include Gln-826, Glu-838, and Asn-840. Residues 936–1078 (LAIERGAPVL…AYRTREAVLA (143 aa)) form the MGS-like domain. The tract at residues 936-1078 (LAIERGAPVL…AYRTREAVLA (143 aa)) is allosteric domain.

The protein belongs to the CarB family. As to quaternary structure, composed of two chains; the small (or glutamine) chain promotes the hydrolysis of glutamine to ammonia, which is used by the large (or ammonia) chain to synthesize carbamoyl phosphate. Tetramer of heterodimers (alpha,beta)4. Mg(2+) serves as cofactor. Requires Mn(2+) as cofactor.

The enzyme catalyses hydrogencarbonate + L-glutamine + 2 ATP + H2O = carbamoyl phosphate + L-glutamate + 2 ADP + phosphate + 2 H(+). It catalyses the reaction hydrogencarbonate + NH4(+) + 2 ATP = carbamoyl phosphate + 2 ADP + phosphate + 2 H(+). The protein operates within amino-acid biosynthesis; L-arginine biosynthesis; carbamoyl phosphate from bicarbonate: step 1/1. It participates in pyrimidine metabolism; UMP biosynthesis via de novo pathway; (S)-dihydroorotate from bicarbonate: step 1/3. Functionally, large subunit of the glutamine-dependent carbamoyl phosphate synthetase (CPSase). CPSase catalyzes the formation of carbamoyl phosphate from the ammonia moiety of glutamine, carbonate, and phosphate donated by ATP, constituting the first step of 2 biosynthetic pathways, one leading to arginine and/or urea and the other to pyrimidine nucleotides. The large subunit (synthetase) binds the substrates ammonia (free or transferred from glutamine from the small subunit), hydrogencarbonate and ATP and carries out an ATP-coupled ligase reaction, activating hydrogencarbonate by forming carboxy phosphate which reacts with ammonia to form carbamoyl phosphate. This is Carbamoyl phosphate synthase large chain from Thermomicrobium roseum (strain ATCC 27502 / DSM 5159 / P-2).